The chain runs to 419 residues: CinA-like protein (419 aa).

This sequence belongs to the CinA family.

This Parasynechococcus marenigrum (strain WH8102) protein is CinA-like protein.